We begin with the raw amino-acid sequence, 95 residues long: Small ribosomal subunit protein bS20 (95 aa).

The segment at 1-22 is disordered; sequence MANIKSQIKRNRTNENNRLRNK. A compositionally biased stretch (basic and acidic residues) spans 12-22; sequence RTNENNRLRNK.

It belongs to the bacterial ribosomal protein bS20 family.

Binds directly to 16S ribosomal RNA. This chain is Small ribosomal subunit protein bS20, found in Tropheryma whipplei (strain TW08/27) (Whipple's bacillus).